A 434-amino-acid polypeptide reads, in one-letter code: Glutamate-1-semialdehyde 2,1-aminomutase 1 (434 aa).

Residue Lys-270 is modified to N6-(pyridoxal phosphate)lysine.

Belongs to the class-III pyridoxal-phosphate-dependent aminotransferase family. HemL subfamily. Homodimer. Pyridoxal 5'-phosphate serves as cofactor.

The protein resides in the cytoplasm. The enzyme catalyses (S)-4-amino-5-oxopentanoate = 5-aminolevulinate. It participates in porphyrin-containing compound metabolism; protoporphyrin-IX biosynthesis; 5-aminolevulinate from L-glutamyl-tRNA(Glu): step 2/2. This chain is Glutamate-1-semialdehyde 2,1-aminomutase 1, found in Bacillus cereus (strain ATCC 10987 / NRS 248).